Reading from the N-terminus, the 355-residue chain is S-methyl-5'-thioadenosine phosphorylase (355 aa).

Residues threonine 45, 91–92 (RH), and 124–125 (SA) each bind phosphate. Residue methionine 226 coordinates substrate. Residue serine 227 coordinates phosphate. Residue 250-252 (DYD) participates in substrate binding.

The protein belongs to the PNP/MTAP phosphorylase family. MTAP subfamily. In terms of assembly, homotrimer.

It is found in the cytoplasm. The protein localises to the nucleus. It carries out the reaction S-methyl-5'-thioadenosine + phosphate = 5-(methylsulfanyl)-alpha-D-ribose 1-phosphate + adenine. It functions in the pathway amino-acid biosynthesis; L-methionine biosynthesis via salvage pathway; S-methyl-5-thio-alpha-D-ribose 1-phosphate from S-methyl-5'-thioadenosine (phosphorylase route): step 1/1. Functionally, catalyzes the reversible phosphorylation of S-methyl-5'-thioadenosine (MTA) to adenine and 5-methylthioribose-1-phosphate. Involved in the breakdown of MTA, a major by-product of polyamine biosynthesis. Responsible for the first step in the methionine salvage pathway after MTA has been generated from S-adenosylmethionine. Has broad substrate specificity with 6-aminopurine nucleosides as preferred substrates. This is S-methyl-5'-thioadenosine phosphorylase from Emericella nidulans (strain FGSC A4 / ATCC 38163 / CBS 112.46 / NRRL 194 / M139) (Aspergillus nidulans).